We begin with the raw amino-acid sequence, 744 residues long: Elongation factor G, mitochondrial (744 aa).

The tr-type G domain occupies 39–316; it reads EKIRNIGISA…AVIDYLPNPG (278 aa). Residues 48 to 55, 115 to 119, and 169 to 172 each bind GTP; these read AHIDSGKT, DTPGH, and NKLD. Over residues 725–735 the composition is skewed to polar residues; that stretch reads VRQYQETQGAS. The disordered stretch occupies residues 725–744; it reads VRQYQETQGASQPDKKKKKN.

Belongs to the TRAFAC class translation factor GTPase superfamily. Classic translation factor GTPase family. EF-G/EF-2 subfamily.

Its subcellular location is the mitochondrion. It participates in protein biosynthesis; polypeptide chain elongation. Functionally, mitochondrial GTPase that catalyzes the GTP-dependent ribosomal translocation step during translation elongation. During this step, the ribosome changes from the pre-translocational (PRE) to the post-translocational (POST) state as the newly formed A-site-bound peptidyl-tRNA and P-site-bound deacylated tRNA move to the P and E sites, respectively. Catalyzes the coordinated movement of the two tRNA molecules, the mRNA and conformational changes in the ribosome. Essential during development as it acts as a retrograde signal from mitochondria to the nucleus to slow down cell proliferation if mitochondrial energy output is low. This is Elongation factor G, mitochondrial from Drosophila pseudoobscura pseudoobscura (Fruit fly).